Reading from the N-terminus, the 319-residue chain is Tetrahydromethanopterin S-methyltransferase subunit H (319 aa).

The protein belongs to the MtrH family. The complex is composed of 8 subunits; MtrA, MtrB, MtrC, MtrD, MtrE, MtrF, MtrG and MtrH.

It carries out the reaction 5-methyl-5,6,7,8-tetrahydromethanopterin + coenzyme M + 2 Na(+)(in) = 5,6,7,8-tetrahydromethanopterin + methyl-coenzyme M + 2 Na(+)(out). Its pathway is one-carbon metabolism; methanogenesis from CO(2); methyl-coenzyme M from 5,10-methylene-5,6,7,8-tetrahydromethanopterin: step 2/2. Part of a complex that catalyzes the formation of methyl-coenzyme M and tetrahydromethanopterin from coenzyme M and methyl-tetrahydromethanopterin. This is an energy-conserving, sodium-ion translocating step. MtrH catalyzes the transfer of the methyl group from methyl-tetrahydromethanopterin to the corrinoid prosthetic group of MtrA. The chain is Tetrahydromethanopterin S-methyltransferase subunit H from Methanococcus maripaludis (strain C5 / ATCC BAA-1333).